A 331-amino-acid polypeptide reads, in one-letter code: Hydroxyacylglutathione hydrolase 1, mitochondrial (331 aa).

The N-terminal 76 residues, Met1–Ser76, are a transit peptide targeting the mitochondrion. Zn(2+)-binding residues include His131 and His133. Fe cation is bound by residues Asp135 and His136. Zn(2+) contacts are provided by His189 and Asp208. Asp208 provides a ligand contact to Fe cation. A substrate-binding site is contributed by Arg246–Asn248.

This sequence belongs to the metallo-beta-lactamase superfamily. Glyoxalase II family. Fe(2+) is required as a cofactor. Fe(3+) serves as cofactor. Requires Zn(2+) as cofactor. In terms of tissue distribution, mainly expressed in roots, flowers and flower buds. Also detected in leaves.

The protein resides in the mitochondrion. The catalysed reaction is an S-(2-hydroxyacyl)glutathione + H2O = a 2-hydroxy carboxylate + glutathione + H(+). The protein operates within secondary metabolite metabolism; methylglyoxal degradation; (R)-lactate from methylglyoxal: step 2/2. Functionally, thiolesterase that catalyzes the hydrolysis of S-D-lactoyl-glutathione to form glutathione and D-lactic acid. This is Hydroxyacylglutathione hydrolase 1, mitochondrial (GLX2-1) from Arabidopsis thaliana (Mouse-ear cress).